Here is a 99-residue protein sequence, read N- to C-terminus: DNA-binding protein Fis (99 aa).

The H-T-H motif DNA-binding region spans 75 to 94; it reads QTRAASIMGINRSTLRKKLK.

This sequence belongs to the transcriptional regulatory Fis family. Homodimer.

Functionally, activates ribosomal RNA transcription. Plays a direct role in upstream activation of rRNA promoters. This is DNA-binding protein Fis from Buchnera aphidicola subsp. Schizaphis graminum (strain Sg).